Reading from the N-terminus, the 484-residue chain is Chromosomal replication initiator protein DnaA (484 aa).

A domain I, interacts with DnaA modulators region spans residues 1-74 (MEKSKNIWSL…ILTKNGYNNV (74 aa)). The domain II stretch occupies residues 74–139 (VTIVFTNQPP…EEEPTNFKNP (66 aa)). Residues 140–356 (FLKKRYTFEN…AAVTKLKAYI (217 aa)) form a domain III, AAA+ region region. ATP is bound by residues glycine 184, glycine 186, lysine 187, and threonine 188. Positions 357–484 (DLDNIEIDID…TELMNKIKKN (128 aa)) are domain IV, binds dsDNA.

Belongs to the DnaA family. As to quaternary structure, oligomerizes as a right-handed, spiral filament on DNA at oriC.

Its subcellular location is the cytoplasm. Its function is as follows. Plays an essential role in the initiation and regulation of chromosomal replication. ATP-DnaA binds to the origin of replication (oriC) to initiate formation of the DNA replication initiation complex once per cell cycle. Binds the DnaA box (a 9 base pair repeat at the origin) and separates the double-stranded (ds)DNA. Forms a right-handed helical filament on oriC DNA; dsDNA binds to the exterior of the filament while single-stranded (ss)DNA is stabiized in the filament's interior. The ATP-DnaA-oriC complex binds and stabilizes one strand of the AT-rich DNA unwinding element (DUE), permitting loading of DNA polymerase. After initiation quickly degrades to an ADP-DnaA complex that is not apt for DNA replication. Binds acidic phospholipids. This is Chromosomal replication initiator protein DnaA from Borrelia garinii subsp. bavariensis (strain ATCC BAA-2496 / DSM 23469 / PBi) (Borreliella bavariensis).